The sequence spans 280 residues: L-proline cis-4-hydroxylase (280 aa).

Residues His106, Asp108, and His154 each contribute to the Fe cation site. Arg164 is a 2-oxoglutarate binding site.

It belongs to the L-proline cis-4-/cis-3-hydroxylase family. The cofactor is Fe(2+).

The catalysed reaction is L-proline + 2-oxoglutarate + O2 = cis-4-hydroxy-L-proline + succinate + CO2. Its activity is regulated as follows. Inhibited by metal ions such as Co(2+), Zn(2+), Cu(2+) or Ni(2+). Is also inhibited by EDTA or diethylpyrocarbonate (DEPC) in vitro. Unlike the procollagen-proline cis-3- and trans-4-hydroxylases from mammals, does not necessarily require L-ascorbate for activity although it does increase the activity of the enzyme. In terms of biological role, dioxygenase that catalyzes the 2-oxoglutarate-dependent selective hydroxylation of free L-proline to cis-4-hydroxy-L-proline (cis-4-Hyp). The sequence is that of L-proline cis-4-hydroxylase from Mesorhizobium japonicum (strain LMG 29417 / CECT 9101 / MAFF 303099) (Mesorhizobium loti (strain MAFF 303099)).